A 1267-amino-acid chain; its full sequence is DNA-directed RNA polymerase subunit beta'' (1267 aa).

Zn(2+) contacts are provided by cysteine 222, cysteine 290, cysteine 297, and cysteine 300.

The protein belongs to the RNA polymerase beta' chain family. RpoC2 subfamily. In terms of assembly, in plastids the minimal PEP RNA polymerase catalytic core is composed of four subunits: alpha, beta, beta', and beta''. When a (nuclear-encoded) sigma factor is associated with the core the holoenzyme is formed, which can initiate transcription. Zn(2+) serves as cofactor.

It is found in the plastid. Its subcellular location is the chloroplast. It carries out the reaction RNA(n) + a ribonucleoside 5'-triphosphate = RNA(n+1) + diphosphate. Functionally, DNA-dependent RNA polymerase catalyzes the transcription of DNA into RNA using the four ribonucleoside triphosphates as substrates. This is DNA-directed RNA polymerase subunit beta'' from Emiliania huxleyi (Coccolithophore).